Here is a 74-residue protein sequence, read N- to C-terminus: Large ribosomal subunit protein bL31 (74 aa).

Cys-16, Cys-18, Cys-38, and Cys-41 together coordinate Zn(2+).

It belongs to the bacterial ribosomal protein bL31 family. Type A subfamily. In terms of assembly, part of the 50S ribosomal subunit. The cofactor is Zn(2+).

Its function is as follows. Binds the 23S rRNA. This Salinispora arenicola (strain CNS-205) protein is Large ribosomal subunit protein bL31.